We begin with the raw amino-acid sequence, 73 residues long: ATP synthase subunit c (73 aa).

2 helical membrane-spanning segments follow: residues 4-24 (LAIGAAIAALTGIGAGVGIGI) and 51-71 (GALAEATAIYGLLVAIMIIIF).

This sequence belongs to the ATPase C chain family. F-type ATPases have 2 components, F(1) - the catalytic core - and F(0) - the membrane proton channel. F(1) has five subunits: alpha(3), beta(3), gamma(1), delta(1), epsilon(1). F(0) has three main subunits: a(1), b(2) and c(10-14). The alpha and beta chains form an alternating ring which encloses part of the gamma chain. F(1) is attached to F(0) by a central stalk formed by the gamma and epsilon chains, while a peripheral stalk is formed by the delta and b chains.

The protein resides in the cell membrane. F(1)F(0) ATP synthase produces ATP from ADP in the presence of a proton or sodium gradient. F-type ATPases consist of two structural domains, F(1) containing the extramembraneous catalytic core and F(0) containing the membrane proton channel, linked together by a central stalk and a peripheral stalk. During catalysis, ATP synthesis in the catalytic domain of F(1) is coupled via a rotary mechanism of the central stalk subunits to proton translocation. Its function is as follows. Key component of the F(0) channel; it plays a direct role in translocation across the membrane. A homomeric c-ring of between 10-14 subunits forms the central stalk rotor element with the F(1) delta and epsilon subunits. The chain is ATP synthase subunit c from Caldanaerobacter subterraneus subsp. tengcongensis (strain DSM 15242 / JCM 11007 / NBRC 100824 / MB4) (Thermoanaerobacter tengcongensis).